Reading from the N-terminus, the 421-residue chain is Lipid II:glycine glycyltransferase (421 aa).

This sequence belongs to the FemABX family. Monomer.

It localises to the cytoplasm. The enzyme catalyses beta-D-GlcNAc-(1-&gt;4)-Mur2Ac(oyl-L-Ala-D-isoglutaminyl-L-Lys-D-Ala-D-Ala)-di-trans,octa-cis-undecaprenyl diphosphate + glycyl-tRNA(Gly) = beta-D-GlcNAc-(1-&gt;4)-Mur2Ac(oyl-L-Ala-D-isoglutaminyl-L-Lys-(N(6)-Gly)-D-Ala-D-Ala)-di-trans,octa-cis-undecaprenyl diphosphate + tRNA(Gly) + H(+). Its function is as follows. Catalyzes the incorporation of the first glycine of the pentaglycine interpeptide bridge, which is characteristic of the S.aureus peptidoglycan. This glycine is added to the epsilon-amino group of the L-lysine of the membrane-bound lipid II intermediate (GlcNAc-(beta-1,4)-N-acetylmuramic acid(-L-Ala-D-iGln-L-Lys-D-Ala-D-Ala)-pyrophosphoryl-undecaprenol), using glycyl-tRNA(Gly) as donor, in a ribosome-independent mechanism. The chain is Lipid II:glycine glycyltransferase (femX) from Staphylococcus aureus (strain MSSA476).